A 283-amino-acid chain; its full sequence is Pantothenate synthetase (283 aa).

34-41 (MGALHDGH) contributes to the ATP binding site. Histidine 41 functions as the Proton donor in the catalytic mechanism. Glutamine 65 contributes to the (R)-pantoate binding site. Glutamine 65 serves as a coordination point for beta-alanine. 152-155 (GEKD) is a binding site for ATP. (R)-pantoate is bound at residue glutamine 158. Residues valine 181 and 189 to 192 (MSSR) each bind ATP.

The protein belongs to the pantothenate synthetase family. In terms of assembly, homodimer.

Its subcellular location is the cytoplasm. The enzyme catalyses (R)-pantoate + beta-alanine + ATP = (R)-pantothenate + AMP + diphosphate + H(+). The protein operates within cofactor biosynthesis; (R)-pantothenate biosynthesis; (R)-pantothenate from (R)-pantoate and beta-alanine: step 1/1. Its function is as follows. Catalyzes the condensation of pantoate with beta-alanine in an ATP-dependent reaction via a pantoyl-adenylate intermediate. The protein is Pantothenate synthetase of Rhodopseudomonas palustris (strain BisB18).